The chain runs to 436 residues: 2-aminohexano-6-lactam racemase (436 aa).

Residues 110-111 (GS), tyrosine 137, and 238-241 (DEVK) contribute to the pyridoxal 5'-phosphate site. Tyrosine 137 is an active-site residue. Lysine 267 is subject to N6-(pyridoxal phosphate)lysine. Residue threonine 295 participates in pyridoxal 5'-phosphate binding.

It belongs to the class-III pyridoxal-phosphate-dependent aminotransferase family. Monomer. Pyridoxal 5'-phosphate is required as a cofactor.

It carries out the reaction L-2-aminohexano-6-lactam = D-2-aminohexano-6-lactam. Functionally, catalyzes the interconversion of L-alpha-amino-epsilon-caprolactam and D-alpha-amino-epsilon-caprolactam. The protein is 2-aminohexano-6-lactam racemase of Achromobacter obae.